Consider the following 627-residue polypeptide: Druantia protein DruC (627 aa).

It is found in the cytoplasm. In terms of biological role, component of antiviral defense system Druantia type I, composed of DruA, DruB, DruC, DruD and DruE. Expression of Druantia in E.coli (strain MG1655) confers resistance to phage lambda, SECphi18, SECphi27 and T4. This Escherichia coli (strain UMEA 4076-1) protein is Druantia protein DruC.